Consider the following 110-residue polypeptide: Prothymosin alpha (110 aa).

Met1 carries the post-translational modification N-acetylmethionine. Positions 1 to 110 are disordered; it reads MSDAAVDTSS…TKKQKTDEDD (110 aa). Position 2 is an N-acetylserine; in Prothymosin alpha, N-terminally processed (Ser2). Position 2 is a phosphoserine (Ser2). At Thr8 the chain carries Phosphothreonine; by CK2. Ser9 and Ser10 each carry phosphoserine. Residues Thr13 and Thr14 each carry the phosphothreonine; by CK2 modification. Residues 13-31 are compositionally biased toward basic and acidic residues; the sequence is TTKDLKEKKEVVEEAENGR. Residue Lys15 is modified to N6-acetyllysine; alternate. Lys15 carries the post-translational modification N6-succinyllysine; alternate. The span at 32–41 shows a compositional bias: low complexity; the sequence is EAPANGNANE. Residues 42–83 show a composition bias toward acidic residues; it reads ENGEQEADNEVDEEEEEGGEEEEEEEEGDGEEEDGDEDEEAE. Over residues 100 to 110 the composition is skewed to basic and acidic residues; the sequence is DTKKQKTDEDD. At Thr101 the chain carries Phosphothreonine. Lys102 bears the N6-acetyllysine; alternate mark. Residue Lys102 forms a Glycyl lysine isopeptide (Lys-Gly) (interchain with G-Cter in SUMO2); alternate linkage. Phosphothreonine is present on Thr106.

Belongs to the pro/parathymosin family. In terms of assembly, interacts with NUPR1; regulates apoptotic process. Post-translationally, covalently linked to a small RNA of about 20 nucleotides.

Its subcellular location is the nucleus. Prothymosin alpha may mediate immune function by conferring resistance to certain opportunistic infections. The polypeptide is Prothymosin alpha (PTMA) (Bos taurus (Bovine)).